The sequence spans 189 residues: MDTEYEQVNKPWNELYKETTLGNKLMVNVGMEDQEVPLLPSNFLTKVRVGLSGGYITMRRIRIKIIPLVSRKAGVSGKLYLRDISDTKGRKLHCTESLDLGREIRLTMQHLDFSVSTRSDVPIVFGFEELVSPFLEGRELFSISVKWQFGLSKNCYSLPQSKWKVMYQEDALKVLKPSKKKASKTGSSV.

This sequence belongs to the tombusvirus/aureusvirus movement protein p22 family. As to quaternary structure, interacts with host protein HFI22. In terms of processing, phosphorylated.

Its subcellular location is the host membrane. Its function is as follows. Transports viral genome to neighboring plant cells directly through plasmosdesmata, without any budding. The movement protein allows efficient cell to cell propagation, by bypassing the host cell wall barrier. The chain is Movement protein from Capsicum annuum (Capsicum pepper).